The primary structure comprises 152 residues: Deoxyuridine 5'-triphosphate nucleotidohydrolase (152 aa).

Substrate-binding positions include 71–73 (RSG), N84, 88–90 (LID), and M98.

Belongs to the dUTPase family. Mg(2+) is required as a cofactor.

The catalysed reaction is dUTP + H2O = dUMP + diphosphate + H(+). Its pathway is pyrimidine metabolism; dUMP biosynthesis; dUMP from dCTP (dUTP route): step 2/2. Functionally, this enzyme is involved in nucleotide metabolism: it produces dUMP, the immediate precursor of thymidine nucleotides and it decreases the intracellular concentration of dUTP so that uracil cannot be incorporated into DNA. This chain is Deoxyuridine 5'-triphosphate nucleotidohydrolase, found in Aeromonas hydrophila subsp. hydrophila (strain ATCC 7966 / DSM 30187 / BCRC 13018 / CCUG 14551 / JCM 1027 / KCTC 2358 / NCIMB 9240 / NCTC 8049).